Reading from the N-terminus, the 375-residue chain is Succinyl-diaminopimelate desuccinylase (375 aa).

Histidine 66 is a binding site for Zn(2+). The active site involves aspartate 68. Zn(2+) is bound at residue aspartate 99. Glutamate 133 serves as the catalytic Proton acceptor. Residues glutamate 134, glutamate 162, and histidine 348 each coordinate Zn(2+).

This sequence belongs to the peptidase M20A family. DapE subfamily. Homodimer. Zn(2+) serves as cofactor. It depends on Co(2+) as a cofactor.

The enzyme catalyses N-succinyl-(2S,6S)-2,6-diaminopimelate + H2O = (2S,6S)-2,6-diaminopimelate + succinate. It functions in the pathway amino-acid biosynthesis; L-lysine biosynthesis via DAP pathway; LL-2,6-diaminopimelate from (S)-tetrahydrodipicolinate (succinylase route): step 3/3. Its function is as follows. Catalyzes the hydrolysis of N-succinyl-L,L-diaminopimelic acid (SDAP), forming succinate and LL-2,6-diaminopimelate (DAP), an intermediate involved in the bacterial biosynthesis of lysine and meso-diaminopimelic acid, an essential component of bacterial cell walls. This Stenotrophomonas maltophilia (strain R551-3) protein is Succinyl-diaminopimelate desuccinylase.